A 181-amino-acid polypeptide reads, in one-letter code: Adenine phosphoribosyltransferase (181 aa).

The protein belongs to the purine/pyrimidine phosphoribosyltransferase family. In terms of assembly, homodimer.

It localises to the cytoplasm. The catalysed reaction is AMP + diphosphate = 5-phospho-alpha-D-ribose 1-diphosphate + adenine. It participates in purine metabolism; AMP biosynthesis via salvage pathway; AMP from adenine: step 1/1. In terms of biological role, catalyzes a salvage reaction resulting in the formation of AMP, that is energically less costly than de novo synthesis. This chain is Adenine phosphoribosyltransferase, found in Vibrio cholerae serotype O1 (strain ATCC 39541 / Classical Ogawa 395 / O395).